We begin with the raw amino-acid sequence, 511 residues long: 2,3-bisphosphoglycerate-independent phosphoglycerate mutase (511 aa).

Mn(2+)-binding residues include aspartate 14 and serine 64. Serine 64 acts as the Phosphoserine intermediate in catalysis. Substrate-binding positions include histidine 125, 155-156, arginine 187, arginine 193, 259-262, and lysine 333; these read RD and RADR. Positions 400, 404, 441, 442, and 460 each coordinate Mn(2+).

Belongs to the BPG-independent phosphoglycerate mutase family. In terms of assembly, monomer. The cofactor is Mn(2+).

It catalyses the reaction (2R)-2-phosphoglycerate = (2R)-3-phosphoglycerate. It functions in the pathway carbohydrate degradation; glycolysis; pyruvate from D-glyceraldehyde 3-phosphate: step 3/5. Its function is as follows. Catalyzes the interconversion of 2-phosphoglycerate and 3-phosphoglycerate. This is 2,3-bisphosphoglycerate-independent phosphoglycerate mutase from Idiomarina loihiensis (strain ATCC BAA-735 / DSM 15497 / L2-TR).